A 282-amino-acid polypeptide reads, in one-letter code: Homeobox protein CDX-4 (282 aa).

Disordered regions lie at residues 13-36 (MYPGTLRSPGGSSTAGVGTSGGSG) and 98-156 (MNDM…SPYA). Residues 20-29 (SPGGSSTAGV) show a composition bias toward low complexity. Polar residues-rich tracts occupy residues 110–124 (DYSTLGPTSGASNGG) and 133–148 (SLVSLDSGTSGATSPS). A DNA-binding region (homeobox) is located at residues 171 to 230 (KEKYRVVYTDHQRLELEKEFHCNRYITIRRKSELAVNLGLSERQVKIWFQNRRAKERKMI).

Belongs to the Caudal homeobox family.

It is found in the nucleus. The sequence is that of Homeobox protein CDX-4 (Cdx4) from Mus musculus (Mouse).